The sequence spans 287 residues: Casein kinase II subunit beta-1 (287 aa).

A disordered region spans residues 1–97; sequence MYRDRGTVNS…ESDVSGSDGE (97 aa). The segment covering 13 to 25 has biased composition (basic and acidic residues); that stretch reads EVVDRKRINDALE. Positions 41–50 are enriched in low complexity; the sequence is GTVTAATTTA. Acidic residues predominate over residues 78–97; that stretch reads SDDESDTDSEESDVSGSDGE.

It belongs to the casein kinase 2 subunit beta family. As to quaternary structure, heterotetramer of two catalytic alpha subunits and two regulatory beta subunits. Interacts with CCA1. Interacts with LHY. In terms of processing, phosphorylated by alpha subunit.

The protein resides in the cytoplasm. It localises to the cytosol. The protein localises to the nucleus. Its function is as follows. Plays a complex role in regulating the basal catalytic activity of the alpha subunit. The tetrameric holoenzyme CK2, composed of two alpha and two beta subunits, phosphorylates the transcription factor GBFl, resulting in stimulation of its DNA binding activity. CK2 phosphorylates the transcription factor PIF1 after an exposure to light, resulting in a proteasome-dependent degradation of PIF1 and promotion of photomorphogenesis. CK2 phosphorylates translation initiation factors. May participate in the regulation of the initiation of translation. Stimulates the binding of CCA1 to promoters. The chain is Casein kinase II subunit beta-1 (CKB1) from Arabidopsis thaliana (Mouse-ear cress).